The following is a 96-amino-acid chain: Putative septation protein SpoVG (96 aa).

This sequence belongs to the SpoVG family.

In terms of biological role, could be involved in septation. This chain is Putative septation protein SpoVG, found in Oceanobacillus iheyensis (strain DSM 14371 / CIP 107618 / JCM 11309 / KCTC 3954 / HTE831).